Consider the following 200-residue polypeptide: Cytochrome c biogenesis ATP-binding export protein CcmA (200 aa).

The ABC transporter domain maps to 2 to 200 (LDVIELDFDY…NKADYEEYHL (199 aa)). 34–41 (GSNGAGKT) lines the ATP pocket.

Belongs to the ABC transporter superfamily. CcmA exporter (TC 3.A.1.107) family. As to quaternary structure, the complex is composed of two ATP-binding proteins (CcmA) and two transmembrane proteins (CcmB).

The protein resides in the cell inner membrane. It carries out the reaction heme b(in) + ATP + H2O = heme b(out) + ADP + phosphate + H(+). Functionally, part of the ABC transporter complex CcmAB involved in the biogenesis of c-type cytochromes; once thought to export heme, this seems not to be the case, but its exact role is uncertain. Responsible for energy coupling to the transport system. This chain is Cytochrome c biogenesis ATP-binding export protein CcmA, found in Legionella pneumophila.